A 559-amino-acid chain; its full sequence is POU domain protein 1 (559 aa).

The region spanning 259–333 (EDLPSSDDLE…LLQKWLHEAD (75 aa)) is the POU-specific domain. Positions 351–410 (KRKKRTSIEANVKSILESSFMKLSKPSAQDISSLAEKLSLEKEVVRVWFCNRRQKEKRIT) form a DNA-binding region, homeobox.

It belongs to the POU transcription factor family.

The protein localises to the nucleus. This Dugesia japonica (Planarian) protein is POU domain protein 1 (POU1).